The chain runs to 621 residues: Type 2 DNA topoisomerase 6 subunit B (621 aa).

ATP is bound by residues asparagine 48, aspartate 80, serine 101–arginine 102, glycine 111–serine 118, and lysine 435.

It belongs to the TOP6B family. Homodimer. Heterotetramer of two Top6A and two Top6B chains.

The enzyme catalyses ATP-dependent breakage, passage and rejoining of double-stranded DNA.. Relaxes both positive and negative superturns and exhibits a strong decatenase activity. The sequence is that of Type 2 DNA topoisomerase 6 subunit B from Methanosarcina barkeri (strain Fusaro / DSM 804).